The chain runs to 100 residues: Putative PIN1-like protein (100 aa).

The segment covering 1–15 (MADEEKLPPGWEKRM) has biased composition (basic and acidic residues). 2 disordered regions span residues 1 to 52 (MADE…QGEP) and 69 to 100 (LDLA…REGL). A WW domain is found at 5–38 (EKLPPGWEKRMSRPSGRGYYFNHITNPSQWERPS). The segment covering 27–44 (HITNPSQWERPSGNSSSG) has biased composition (polar residues). The segment covering 87 to 100 (QRLHPEDQGRREGL) has biased composition (basic and acidic residues).

The protein is Putative PIN1-like protein (PIN1P1) of Homo sapiens (Human).